Consider the following 89-residue polypeptide: Small ribosomal subunit protein uS15 (89 aa).

It belongs to the universal ribosomal protein uS15 family. In terms of assembly, part of the 30S ribosomal subunit. Forms a bridge to the 50S subunit in the 70S ribosome, contacting the 23S rRNA.

Its function is as follows. One of the primary rRNA binding proteins, it binds directly to 16S rRNA where it helps nucleate assembly of the platform of the 30S subunit by binding and bridging several RNA helices of the 16S rRNA. Forms an intersubunit bridge (bridge B4) with the 23S rRNA of the 50S subunit in the ribosome. This Herminiimonas arsenicoxydans protein is Small ribosomal subunit protein uS15.